The chain runs to 386 residues: MCSSVAAKLWFLTDRRIREDYPQKEILRALKAKCCEEELDFRAVVMDEVVLTIEQGNLGLRINGELITAYPQVVVVRVPTPWVQSDSDITVLRHLEKMGCRLMNRPQAILNCVNKFWTFQELAGHGVPLPDTFSYGGHENFAKMIDEAEVLEFPMVVKNTRGHRGKAVFLARDKHHLADLSHLIRHEAPYLFQKYVKESHGRDVRVIVVGGRVVGTMLRCSTDGRMQSNCSLGGVGMMCSLSEQGKQLAIQVSNILGMDVCGIDLLMKDDGSFCVCEANANVGFIAFDKACNLDVAGIIADYAASLLPSGRLTRRMSLLSVVSTASETSEPELGPPASTAVDNMSASSSSVDSDPESTERELLTKLPGGLFNMNQLLANEIKLLVD.

Residues 119-304 form the ATP-grasp domain; sequence FQELAGHGVP…VAGIIADYAA (186 aa). Residues Lys-158, 193-203, and Arg-219 contribute to the ATP site; that span reads QKYVKESHGRD. 3 residues coordinate Mg(2+): Asp-264, Glu-277, and Asn-279. Positions 264, 277, and 279 each coordinate Mn(2+). The segment at 325-359 is disordered; the sequence is ASETSEPELGPPASTAVDNMSASSSSVDSDPESTE. A compositionally biased stretch (low complexity) spans 338–352; that stretch reads STAVDNMSASSSSVD.

It belongs to the RimK family. Mg(2+) is required as a cofactor. Requires Mn(2+) as cofactor.

It is found in the cytoplasm. It carries out the reaction citrate + L-glutamate + ATP = beta-citrylglutamate + ADP + phosphate + H(+). It catalyses the reaction N-acetyl-L-aspartate + L-glutamate + ATP = N-acetyl-L-aspartyl-L-glutamate + ADP + phosphate + H(+). Its function is as follows. Catalyzes the synthesis of beta-citryl-L-glutamate and N-acetyl-L-aspartyl-L-glutamate. Beta-citryl-L-glutamate is synthesized more efficiently than N-acetyl-L-aspartyl-L-glutamate. The sequence is that of Beta-citrylglutamate synthase B (RIMKLB) from Homo sapiens (Human).